Consider the following 113-residue polypeptide: Photosystem II reaction center Psb28 protein (113 aa).

Belongs to the Psb28 family. Part of the photosystem II complex.

Its subcellular location is the cellular thylakoid membrane. The protein is Photosystem II reaction center Psb28 protein of Prochlorococcus marinus (strain NATL2A).